Here is a 113-residue protein sequence, read N- to C-terminus: Large ribosomal subunit protein bL17 (113 aa).

The protein belongs to the bacterial ribosomal protein bL17 family. As to quaternary structure, part of the 50S ribosomal subunit. Contacts protein L32.

The protein is Large ribosomal subunit protein bL17 of Clostridium botulinum (strain Loch Maree / Type A3).